A 594-amino-acid chain; its full sequence is UvrABC system protein C (594 aa).

In terms of domain architecture, GIY-YIG spans 14-91; the sequence is DKPGCYLMKD…IKKHDPKYNV (78 aa). Residues 196–231 form the UVR domain; it reads SDIKEQLRERMEKAAEDLDFERAKELRDTIAQMEKV.

This sequence belongs to the UvrC family. Interacts with UvrB in an incision complex.

It localises to the cytoplasm. Its function is as follows. The UvrABC repair system catalyzes the recognition and processing of DNA lesions. UvrC both incises the 5' and 3' sides of the lesion. The N-terminal half is responsible for the 3' incision and the C-terminal half is responsible for the 5' incision. This chain is UvrABC system protein C, found in Shouchella clausii (strain KSM-K16) (Alkalihalobacillus clausii).